A 204-amino-acid chain; its full sequence is Recombination protein RecR (204 aa).

A C4-type zinc finger spans residues 58 to 75 (CSICQNVTDRGDDPCSIC). One can recognise a Toprim domain in the interval 83–181 (SKICVVESPP…EVTKIARGIP (99 aa)).

It belongs to the RecR family.

May play a role in DNA repair. It seems to be involved in an RecBC-independent recombinational process of DNA repair. It may act with RecF and RecO. The polypeptide is Recombination protein RecR (Chlorobium phaeobacteroides (strain BS1)).